We begin with the raw amino-acid sequence, 648 residues long: MRIAKILLPVSKLFPLDYLITEDLELNIGDLVVVHFRNKELTGIVWELDTNSEAKKIKTIEAKAPLNLSITLEVLELIKWMSSYYMSELGSIAKLVLPINISEKPIKIKEQQVKNHFVLPKLSEEQKQAVTILNESNKPTLIKGVTGSGKTEIYFHIIADYLIKGRQVLIMLPEIALGKQIINRFIDRFGFEPIIWNSSVTKAQKKMILRGILSNKVKVVIGTRSSLFLPFHNLGLIVIDEEHDDSYKQDDNILYNARDTAIVRGKFDKAKIVLCSATPSLETIYNIKTHKYQLVTLANRYKNVDLPNIEIIDMTKEKLPKNSYLSKILIDAIKGNLENKKQALLFLNRRGYAPLMLCKACGHRFTCKFCSAWMVLHKATKKLECHHCGYQSKIFSSCPECLEDETLTICGPGIERIAEEAMLLFPKSKIAVISKDHAKTPEKIAQLLHQMENLEIDILIGTQIITKGYHFPNLTLVGVIDADLGSNNAELRASERTFQLLHQVGGRAGRGDSKGVVYLQSYYPDNIIFSYVKVGDEDRFFTNELEIRKAANMPPFSKTASLILSGFSESKILDIARKIVQIAPKANVKILGPARSLMSKLAGKYRYRILIIADKKFNLQKYLKFWLGFIKIPSYCQIKIDIDPKTFY.

A Helicase ATP-binding domain is found at 131–297 (TILNESNKPT…KTHKYQLVTL (167 aa)). Residue 144–151 (GVTGSGKT) coordinates ATP. Positions 240–243 (DEEH) match the DEAH box motif. Positions 358, 361, 367, 370, 385, 388, 398, and 401 each coordinate Zn(2+). Positions 375–548 (VLHKATKKLE…RFFTNELEIR (174 aa)) constitute a Helicase C-terminal domain.

It belongs to the helicase family. PriA subfamily. Component of the replication restart primosome. It depends on Zn(2+) as a cofactor.

The enzyme catalyses Couples ATP hydrolysis with the unwinding of duplex DNA by translocating in the 3'-5' direction.. It carries out the reaction ATP + H2O = ADP + phosphate + H(+). Its function is as follows. Initiates the restart of stalled replication forks, which reloads the replicative helicase on sites other than the origin of replication. Recognizes and binds to abandoned replication forks and remodels them to uncover a helicase loading site. Promotes assembly of the primosome at these replication forks. In Rickettsia prowazekii (strain Madrid E), this protein is Replication restart protein PriA.